Consider the following 261-residue polypeptide: Ribosomal RNA small subunit methyltransferase J (261 aa).

S-adenosyl-L-methionine-binding positions include 111–112 (RD), 127–128 (ER), 163–164 (SS), and D181.

Belongs to the methyltransferase superfamily. RsmJ family.

The protein localises to the cytoplasm. It catalyses the reaction guanosine(1516) in 16S rRNA + S-adenosyl-L-methionine = N(2)-methylguanosine(1516) in 16S rRNA + S-adenosyl-L-homocysteine + H(+). Functionally, specifically methylates the guanosine in position 1516 of 16S rRNA. The polypeptide is Ribosomal RNA small subunit methyltransferase J (Shewanella sp. (strain MR-4)).